A 278-amino-acid polypeptide reads, in one-letter code: ATP synthase subunit delta (278 aa).

Belongs to the ATPase delta chain family. In terms of assembly, F-type ATPases have 2 components, F(1) - the catalytic core - and F(0) - the membrane proton channel. F(1) has five subunits: alpha(3), beta(3), gamma(1), delta(1), epsilon(1). F(0) has three main subunits: a(1), b(2) and c(10-14). The alpha and beta chains form an alternating ring which encloses part of the gamma chain. F(1) is attached to F(0) by a central stalk formed by the gamma and epsilon chains, while a peripheral stalk is formed by the delta and b chains.

The protein localises to the cell membrane. Functionally, f(1)F(0) ATP synthase produces ATP from ADP in the presence of a proton or sodium gradient. F-type ATPases consist of two structural domains, F(1) containing the extramembraneous catalytic core and F(0) containing the membrane proton channel, linked together by a central stalk and a peripheral stalk. During catalysis, ATP synthesis in the catalytic domain of F(1) is coupled via a rotary mechanism of the central stalk subunits to proton translocation. This protein is part of the stalk that links CF(0) to CF(1). It either transmits conformational changes from CF(0) to CF(1) or is implicated in proton conduction. This is ATP synthase subunit delta from Rhodococcus opacus (strain B4).